The sequence spans 398 residues: MSIYLTAEVPGTGGVIKATPEDFLVEEIPAYLPSGQGEHCFAVLEKRGIATLEALRRLAKALGVQERDLGYAGMKDAIGITRQTISIPRVAPEKVLALEIPGITVLSASMHGNKLRLGHLKGNRFVIRVRDVAQGAAGNAEAALEIMTRRGVPNRFGVQRYGAQGNTHEIGAAMLRREFKSAVDRLIGDPAAVTDERWRLAIEAYRRGEVAESLALFPGHFRVERELLTRLVQRPDGFERAFNSVQPRMKRLYLSAFQSSLFDLVLGKRLDSFDQVNVGDIAFKHENGACFLVQDLAAEAPRAESFEISPTGPMFGCTMMESHGAQGELEREVLAAQELTLESFNLSGGLRMEGERRPLRVPIAGAEVRQDGSDLLLDFSLPRGAYATCVLSEIMKSD.

Aspartate 76 acts as the Nucleophile in catalysis. The 211-residue stretch at 151-361 (GVPNRFGVQR…MEGERRPLRV (211 aa)) folds into the TRUD domain.

It belongs to the pseudouridine synthase TruD family.

The catalysed reaction is uridine(13) in tRNA = pseudouridine(13) in tRNA. Its function is as follows. Responsible for synthesis of pseudouridine from uracil-13 in transfer RNAs. The protein is tRNA pseudouridine synthase D of Geobacter sp. (strain M21).